We begin with the raw amino-acid sequence, 197 residues long: Ribonuclease HII (197 aa).

The 194-residue stretch at Ile-4–Ser-197 folds into the RNase H type-2 domain. Residues Asp-10, Glu-11, and Asp-106 each coordinate a divalent metal cation.

The protein belongs to the RNase HII family. The cofactor is Mn(2+). Mg(2+) is required as a cofactor.

It is found in the cytoplasm. The enzyme catalyses Endonucleolytic cleavage to 5'-phosphomonoester.. In terms of biological role, endonuclease that specifically degrades the RNA of RNA-DNA hybrids. The sequence is that of Ribonuclease HII from Polynucleobacter necessarius subsp. necessarius (strain STIR1).